A 448-amino-acid polypeptide reads, in one-letter code: Probable rhamnogalacturonase E (448 aa).

A signal peptide spans 1-22 (MTWSTSFLVATSLLSIINSVHA). C43 and C69 are oxidised to a cystine. N-linked (GlcNAc...) asparagine glycans are attached at residues N54, N92, and N131. The active-site Proton donor is D221. Residues C223 and C240 are joined by a disulfide bond. N256 and N284 each carry an N-linked (GlcNAc...) asparagine glycan. H296 is an active-site residue. N-linked (GlcNAc...) asparagine glycans are attached at residues N323 and N328. 2 disulfides stabilise this stretch: C346-C352 and C374-C382.

The protein belongs to the glycosyl hydrolase 28 family.

It is found in the secreted. Functionally, pectinolytic enzymes consist of four classes of enzymes: pectine lyase, polygalacturonase, pectin methylesterase and rhamnogalacturonase. Hydrolyzes alpha-D-galacturonopyranosyl-(1,2)-alpha-L-rhamnopyranosyl linkages in the backbone of the hairy regions of pectins. The sequence is that of Probable rhamnogalacturonase E (rhgE) from Aspergillus niger (strain ATCC MYA-4892 / CBS 513.88 / FGSC A1513).